Here is a 309-residue protein sequence, read N- to C-terminus: Methionyl-tRNA formyltransferase (309 aa).

Serine 110–proline 113 is a (6S)-5,6,7,8-tetrahydrofolate binding site.

It belongs to the Fmt family.

It catalyses the reaction L-methionyl-tRNA(fMet) + (6R)-10-formyltetrahydrofolate = N-formyl-L-methionyl-tRNA(fMet) + (6S)-5,6,7,8-tetrahydrofolate + H(+). In terms of biological role, attaches a formyl group to the free amino group of methionyl-tRNA(fMet). The formyl group appears to play a dual role in the initiator identity of N-formylmethionyl-tRNA by promoting its recognition by IF2 and preventing the misappropriation of this tRNA by the elongation apparatus. The chain is Methionyl-tRNA formyltransferase from Caldanaerobacter subterraneus subsp. tengcongensis (strain DSM 15242 / JCM 11007 / NBRC 100824 / MB4) (Thermoanaerobacter tengcongensis).